We begin with the raw amino-acid sequence, 163 residues long: MADPRRARLTDDTEIAGARALIVEARFYDDIQDAMLEGARAELTAAGLTHDVITVPGALEIPAAIAIALDAAEAHGKPYDAVIALGCVVRGDTIHFEIVSMESSRALMDLAVSRKIPLGNGIITVNTDEQAWARAKATELDKGGDAARAALAMLRIKRRLAKG.

Residues Phe27, 58–60 (ALE), and 87–89 (CVV) each bind 5-amino-6-(D-ribitylamino)uracil. 92–93 (DT) lines the (2S)-2-hydroxy-3-oxobutyl phosphate pocket. His95 serves as the catalytic Proton donor. A 5-amino-6-(D-ribitylamino)uracil-binding site is contributed by Asn120. Arg134 is a (2S)-2-hydroxy-3-oxobutyl phosphate binding site.

The protein belongs to the DMRL synthase family.

It carries out the reaction (2S)-2-hydroxy-3-oxobutyl phosphate + 5-amino-6-(D-ribitylamino)uracil = 6,7-dimethyl-8-(1-D-ribityl)lumazine + phosphate + 2 H2O + H(+). The protein operates within cofactor biosynthesis; riboflavin biosynthesis; riboflavin from 2-hydroxy-3-oxobutyl phosphate and 5-amino-6-(D-ribitylamino)uracil: step 1/2. In terms of biological role, catalyzes the formation of 6,7-dimethyl-8-ribityllumazine by condensation of 5-amino-6-(D-ribitylamino)uracil with 3,4-dihydroxy-2-butanone 4-phosphate. This is the penultimate step in the biosynthesis of riboflavin. The chain is 6,7-dimethyl-8-ribityllumazine synthase from Rhodopseudomonas palustris (strain BisA53).